The primary structure comprises 204 residues: Putative AgrB-like protein (204 aa).

5 helical membrane-spanning segments follow: residues 51–73 (VYGI…SYLW), 87–107 (LNCT…FQNI), 111–131 (NWIV…FAPA), 151–168 (AMIG…IPFA), and 173–190 (LIMV…PLTY).

Belongs to the AgrB family.

Its subcellular location is the cell membrane. Functionally, may be involved in the proteolytic processing of a quorum sensing system signal molecule precursor. The chain is Putative AgrB-like protein from Listeria innocua serovar 6a (strain ATCC BAA-680 / CLIP 11262).